The primary structure comprises 256 residues: Thiazole synthase (256 aa).

Lys95 serves as the catalytic Schiff-base intermediate with DXP. 1-deoxy-D-xylulose 5-phosphate is bound by residues Gly156, 182–183 (AG), and 204–205 (NT).

This sequence belongs to the ThiG family. Homotetramer. Forms heterodimers with either ThiH or ThiS.

The protein resides in the cytoplasm. It carries out the reaction [ThiS sulfur-carrier protein]-C-terminal-Gly-aminoethanethioate + 2-iminoacetate + 1-deoxy-D-xylulose 5-phosphate = [ThiS sulfur-carrier protein]-C-terminal Gly-Gly + 2-[(2R,5Z)-2-carboxy-4-methylthiazol-5(2H)-ylidene]ethyl phosphate + 2 H2O + H(+). The protein operates within cofactor biosynthesis; thiamine diphosphate biosynthesis. Functionally, catalyzes the rearrangement of 1-deoxy-D-xylulose 5-phosphate (DXP) to produce the thiazole phosphate moiety of thiamine. Sulfur is provided by the thiocarboxylate moiety of the carrier protein ThiS. In vitro, sulfur can be provided by H(2)S. This chain is Thiazole synthase, found in Salmonella enteritidis PT4 (strain P125109).